Consider the following 730-residue polypeptide: Matrix metalloproteinase-9 (730 aa).

A signal peptide spans 1–19 (MSPWQPLLLALLAFGCSSA). The propeptide at 20–107 (APYQRQPTFV…PRCGVPDVGR (88 aa)) is activation peptide. N-linked (GlcNAc...) asparagine glycosylation is present at N39. The Cysteine switch signature appears at 98-105 (PRCGVPDV). C100 contacts Zn(2+). N120 and N127 each carry an N-linked (GlcNAc...) asparagine glycan. Residues D131 and D165 each contribute to the Ca(2+) site. Residues H175 and D177 each coordinate Zn(2+). D182, G183, D185, and L187 together coordinate Ca(2+). H190 contacts Zn(2+). 3 residues coordinate Ca(2+): G197, Q199, and D201. H203 provides a ligand contact to Zn(2+). Ca(2+) contacts are provided by D205, D206, and E208. 3 Fibronectin type-II domains span residues 225 to 273 (SNGA…FCPS), 283 to 331 (GEGK…FCPT), and 342 to 390 (SAGE…FCPD). Cystine bridges form between C230-C256, C244-C271, C288-C314, C302-C329, C347-C373, and C361-C388. H401 is a Zn(2+) binding site. E402 is an active-site residue. H405 and H411 together coordinate Zn(2+). The tract at residues 442-529 (LYGRGSKPDP…SEASTESLSP (88 aa)) is disordered. Residues 463-477 (PTAPPTMCPTIPPTA) are compositionally biased toward pro residues. Positions 478-489 (YPTVGPTVGPTG) are enriched in low complexity. Over residues 490 to 514 (APSPGPTSSPSPGPTGAPSPGPTAP) the composition is skewed to pro residues. C534 and C729 form a disulfide bridge. Hemopexin repeat units follow at residues 536-581 (VDVF…WPAL), 582-626 (PATL…GLGP), 628-675 (VTHV…FSGV), and 676-729 (PWNS…LLQC).

The protein belongs to the peptidase M10A family. In terms of assembly, exists as monomer or homodimer; disulfide-linked. Also exists as heterodimer with LCN2. Macrophages and transformed cell lines produce only the monomeric form. Interacts with ECM1. Requires Zn(2+) as cofactor. Ca(2+) serves as cofactor. In terms of processing, N- and O-glycosylated.

Its subcellular location is the secreted. The protein localises to the extracellular space. It is found in the extracellular matrix. It catalyses the reaction Cleavage of gelatin types I and V and collagen types IV and V.. Its activity is regulated as follows. Inhibited by histatin-3 1/24 (histatin-5). Inhibited by ECM1. In terms of biological role, matrix metalloproteinase that plays an essential role in local proteolysis of the extracellular matrix and in leukocyte migration. Could play a role in bone osteoclastic resorption. Cleaves KiSS1 at a Gly-|-Leu bond. Cleaves NINJ1 to generate the Secreted ninjurin-1 form. Cleaves type IV and type V collagen into large C-terminal three quarter fragments and shorter N-terminal one quarter fragments. Degrades fibronectin but not laminin or Pz-peptide. The polypeptide is Matrix metalloproteinase-9 (Mmp9) (Mus musculus (Mouse)).